A 188-amino-acid polypeptide reads, in one-letter code: Ribosome-recycling factor (188 aa).

The protein belongs to the RRF family.

It is found in the cytoplasm. Functionally, responsible for the release of ribosomes from messenger RNA at the termination of protein biosynthesis. May increase the efficiency of translation by recycling ribosomes from one round of translation to another. The chain is Ribosome-recycling factor from Caulobacter sp. (strain K31).